A 1275-amino-acid polypeptide reads, in one-letter code: uncharacterized protein (1275 aa).

This is an uncharacterized protein from Homo sapiens (Human).